The following is a 547-amino-acid chain: Vacuolar fusion protein MON1 homolog B (547 aa).

N-acetylmethionine is present on methionine 1. The segment at 1–106 (MEAGGDTAAP…GGDPSDEEWR (106 aa)) is disordered. The span at 57–66 (PPSPSPPPQS) shows a compositional bias: pro residues. Residues serine 59 and serine 61 each carry the phosphoserine modification.

Belongs to the MON1/SAND family. As to quaternary structure, interacts with CCNT2; down-regulates CCNT2-mediated activation of viral promoters during herpes simplex virus 1/HHV-1 infection. Found in a complex with RMC1, CCZ1 MON1A and MON1B.

This chain is Vacuolar fusion protein MON1 homolog B (MON1B), found in Macaca fascicularis (Crab-eating macaque).